Here is a 103-residue protein sequence, read N- to C-terminus: MPNQRIRIRLKAFDHKLIDQSTAEIVETAKRTGAQVSGPIPLPTRKERYTVLISPHVNKDARDQYEIRTHKRLVDIIEPTDKTVDALMRLDLAAGVDVQISLG.

The protein belongs to the universal ribosomal protein uS10 family. In terms of assembly, part of the 30S ribosomal subunit.

Its function is as follows. Involved in the binding of tRNA to the ribosomes. The polypeptide is Small ribosomal subunit protein uS10 (Alteromonas mediterranea (strain DSM 17117 / CIP 110805 / LMG 28347 / Deep ecotype)).